The primary structure comprises 631 residues: Phosphomethylpyrimidine synthase (631 aa).

Substrate contacts are provided by residues Asn239, Met268, Tyr297, His333, 353–355 (SRG), 394–397 (DGLR), and Glu433. His437 contacts Zn(2+). Tyr460 serves as a coordination point for substrate. Position 501 (His501) interacts with Zn(2+). Positions 581, 584, and 589 each coordinate [4Fe-4S] cluster.

Belongs to the ThiC family. As to quaternary structure, homodimer. It depends on [4Fe-4S] cluster as a cofactor.

The enzyme catalyses 5-amino-1-(5-phospho-beta-D-ribosyl)imidazole + S-adenosyl-L-methionine = 4-amino-2-methyl-5-(phosphooxymethyl)pyrimidine + CO + 5'-deoxyadenosine + formate + L-methionine + 3 H(+). Its pathway is cofactor biosynthesis; thiamine diphosphate biosynthesis. Catalyzes the synthesis of the hydroxymethylpyrimidine phosphate (HMP-P) moiety of thiamine from aminoimidazole ribotide (AIR) in a radical S-adenosyl-L-methionine (SAM)-dependent reaction. This chain is Phosphomethylpyrimidine synthase, found in Salmonella dublin (strain CT_02021853).